Here is a 279-residue protein sequence, read N- to C-terminus: Acetyl-coenzyme A carboxylase carboxyl transferase subunit beta (279 aa).

A CoA carboxyltransferase N-terminal domain is found at 23–279; it reads MWWKCDECGA…IVRLMTMLAP (257 aa). The Zn(2+) site is built by Cys-27, Cys-30, Cys-46, and Cys-49. Residues 27–49 form a C4-type zinc finger; that stretch reads CDECGAMLHKKQLEDNFYTCSEC.

Belongs to the AccD/PCCB family. In terms of assembly, acetyl-CoA carboxylase is a heterohexamer composed of biotin carboxyl carrier protein (AccB), biotin carboxylase (AccC) and two subunits each of ACCase subunit alpha (AccA) and ACCase subunit beta (AccD). Zn(2+) is required as a cofactor.

It is found in the cytoplasm. It carries out the reaction N(6)-carboxybiotinyl-L-lysyl-[protein] + acetyl-CoA = N(6)-biotinyl-L-lysyl-[protein] + malonyl-CoA. It functions in the pathway lipid metabolism; malonyl-CoA biosynthesis; malonyl-CoA from acetyl-CoA: step 1/1. Functionally, component of the acetyl coenzyme A carboxylase (ACC) complex. Biotin carboxylase (BC) catalyzes the carboxylation of biotin on its carrier protein (BCCP) and then the CO(2) group is transferred by the transcarboxylase to acetyl-CoA to form malonyl-CoA. The protein is Acetyl-coenzyme A carboxylase carboxyl transferase subunit beta of Chlorobium phaeobacteroides (strain DSM 266 / SMG 266 / 2430).